A 150-amino-acid chain; its full sequence is Ribonuclease pancreatic delta-type (150 aa).

The N-terminal stretch at 1-25 (MGLEKSLILFSLLVLVLGWVQPSLG) is a signal peptide. Residue arginine 35 participates in substrate binding. Histidine 37 serves as the catalytic Proton acceptor. 4 disulfides stabilise this stretch: cysteine 51-cysteine 110, cysteine 65-cysteine 121, cysteine 83-cysteine 136, and cysteine 90-cysteine 98. Substrate-binding positions include 66–70 (KRVNT), lysine 91, and arginine 111. The active-site Proton donor is the histidine 145.

This sequence belongs to the pancreatic ribonuclease family. In terms of assembly, monomer.

The protein resides in the secreted. The enzyme catalyses an [RNA] containing cytidine + H2O = an [RNA]-3'-cytidine-3'-phosphate + a 5'-hydroxy-ribonucleotide-3'-[RNA].. It carries out the reaction an [RNA] containing uridine + H2O = an [RNA]-3'-uridine-3'-phosphate + a 5'-hydroxy-ribonucleotide-3'-[RNA].. Endonuclease that catalyzes the cleavage of RNA on the 3' side of pyrimidine nucleotides. Acts on single-stranded and double-stranded RNA. The polypeptide is Ribonuclease pancreatic delta-type (Rattus exulans (Polynesian rat)).